The primary structure comprises 716 residues: Polyribonucleotide nucleotidyltransferase (716 aa).

Residues D495 and D501 each contribute to the Mg(2+) site. The KH domain occupies 562–621; the sequence is PRLFRIQINPEQIGLVIGPGGKTIRSITEQTGAKIDIEDTGAVTISAVDADSALRAKSII. Residues 631-699 form the S1 motif domain; the sequence is GDVYIGKVTR…QKGRVNLTRK (69 aa).

It belongs to the polyribonucleotide nucleotidyltransferase family. Mg(2+) is required as a cofactor.

It localises to the cytoplasm. The enzyme catalyses RNA(n+1) + phosphate = RNA(n) + a ribonucleoside 5'-diphosphate. Functionally, involved in mRNA degradation. Catalyzes the phosphorolysis of single-stranded polyribonucleotides processively in the 3'- to 5'-direction. This is Polyribonucleotide nucleotidyltransferase from Synechococcus sp. (strain ATCC 27144 / PCC 6301 / SAUG 1402/1) (Anacystis nidulans).